A 478-amino-acid polypeptide reads, in one-letter code: Transcript termination protein A18 (478 aa).

The Helicase ATP-binding domain occupies 98 to 254; sequence KLSTHRPMYM…NDVVNVLKVS (157 aa). 111–118 contacts ATP; the sequence is LSCGFGKT. The short motif at 204–207 is the DESH box element; sequence DESH. Residues 302–454 enclose the Helicase C-terminal domain; sequence PRNNLIVDTV…IVSVSTDKLG (153 aa). The segment at 456-478 is disordered; sequence QQEGKEGTKEEPALTKAFSSQIR. A compositionally biased stretch (basic and acidic residues) spans 458-468; sequence EGKEGTKEEPA.

The protein belongs to the helicase family. Poxviruses subfamily. In terms of assembly, interacts with G2. Might be part of a transcription complex composed at least of G2, A18, and H5.

The protein resides in the virion. Its function is as follows. DNA helicase which seems to act as a postreplicative transcription termination factor. Involved in ATP-dependent release of nascent RNA. Forms a stable complex with single-stranded DNA, and to a lesser extent RNA. The sequence is that of Transcript termination protein A18 from Oryctolagus cuniculus (Rabbit).